Here is a 119-residue protein sequence, read N- to C-terminus: Large ribosomal subunit protein bL20 (119 aa).

The protein belongs to the bacterial ribosomal protein bL20 family.

Binds directly to 23S ribosomal RNA and is necessary for the in vitro assembly process of the 50S ribosomal subunit. It is not involved in the protein synthesizing functions of that subunit. This chain is Large ribosomal subunit protein bL20, found in Clostridium kluyveri (strain NBRC 12016).